We begin with the raw amino-acid sequence, 302 residues long: tRNA pseudouridine synthase B (302 aa).

Catalysis depends on aspartate 48, which acts as the Nucleophile.

It belongs to the pseudouridine synthase TruB family. Type 1 subfamily.

The enzyme catalyses uridine(55) in tRNA = pseudouridine(55) in tRNA. In terms of biological role, responsible for synthesis of pseudouridine from uracil-55 in the psi GC loop of transfer RNAs. The chain is tRNA pseudouridine synthase B from Xylella fastidiosa (strain Temecula1 / ATCC 700964).